A 212-amino-acid chain; its full sequence is Pyridoxine/pyridoxamine 5'-phosphate oxidase (212 aa).

Substrate is bound by residues 8–11 and Lys66; that span reads RREY. FMN-binding positions include 61 to 66, 76 to 77, Arg82, Lys83, and Gln105; these read RIVLLK and FT. Substrate contacts are provided by Tyr123, Arg127, and Ser131. Residues 140 to 141 and Trp185 contribute to the FMN site; that span reads QS. 191 to 193 is a substrate binding site; it reads RLH. Residue Arg195 coordinates FMN.

This sequence belongs to the pyridoxamine 5'-phosphate oxidase family. In terms of assembly, homodimer. The cofactor is FMN.

The catalysed reaction is pyridoxamine 5'-phosphate + O2 + H2O = pyridoxal 5'-phosphate + H2O2 + NH4(+). It catalyses the reaction pyridoxine 5'-phosphate + O2 = pyridoxal 5'-phosphate + H2O2. It functions in the pathway cofactor metabolism; pyridoxal 5'-phosphate salvage; pyridoxal 5'-phosphate from pyridoxamine 5'-phosphate: step 1/1. It participates in cofactor metabolism; pyridoxal 5'-phosphate salvage; pyridoxal 5'-phosphate from pyridoxine 5'-phosphate: step 1/1. Its function is as follows. Catalyzes the oxidation of either pyridoxine 5'-phosphate (PNP) or pyridoxamine 5'-phosphate (PMP) into pyridoxal 5'-phosphate (PLP). This Shewanella halifaxensis (strain HAW-EB4) protein is Pyridoxine/pyridoxamine 5'-phosphate oxidase.